The sequence spans 334 residues: Thioredoxin reductase (334 aa).

Residues 11-14, 40-41, Gln45, Asn54, Cys148, Asp294, and 301-303 each bind FAD; these read SGAG, TA, and RQA. The cysteines at positions 145 and 148 are disulfide-linked.

This sequence belongs to the class-II pyridine nucleotide-disulfide oxidoreductase family. As to quaternary structure, homodimer. The cofactor is FAD.

The catalysed reaction is [thioredoxin]-dithiol + NADP(+) = [thioredoxin]-disulfide + NADPH + H(+). Functionally, component of the thioredoxin-thioredoxin reductase system which may be involved in biosynthesis of penicillins and cephalosporins and may be important in determining the thiol-disulfide redox balance. The protein is Thioredoxin reductase (TRR1) of Penicillium chrysogenum (Penicillium notatum).